We begin with the raw amino-acid sequence, 296 residues long: Nucleotide-binding protein stu0831 (296 aa).

Residue glycine 13 to threonine 20 coordinates ATP. Aspartate 63 to serine 66 contributes to the GTP binding site.

This sequence belongs to the RapZ-like family.

Functionally, displays ATPase and GTPase activities. In Streptococcus thermophilus (strain ATCC BAA-250 / LMG 18311), this protein is Nucleotide-binding protein stu0831.